Consider the following 418-residue polypeptide: MAPRGRRRPRPHRSEGARRSKNTLERTHSMKDKAGQKCKPIDVFDFPDNSDVSSIGRLGENEKDEETYETFDPPLHSTAIYADEEEFSKHCGLSLSSTPPGKEAKRSSDTSGNEASEIESVKISAKKPGRKLRPISDDSESIEESDTRRKVKSAEKISTQRHEVIRTTASSELSEKPAESVTSKKTGPLSAQPSVEKENLAIESQSKTQKKGKISHDKRKKSRSKAIGSDTSDIVHIWCPEGMKTSDIKELNIVLPEFEKTHLEHQQRIESKVCKAAIATFYVNVKEQFIKMLKESQMLTNLKRKNAKMISDIEKKRQRMIEVQDELLRLEPQLKQLQTKYDELKERKSSLRNAAYFLSNLKQLYQDYSDVQAQEPNVKETYDSSSLPALLFKARTLLGAESHLRNINHQLEKLLDQG.

Over residues 1–11 (MAPRGRRRPRP) the composition is skewed to basic residues. The interval 1-76 (MAPRGRRRPR…TYETFDPPLH (76 aa)) is disordered. The short motif at 6–23 (RRRPRPHRSEGARRSKNT) is the Nuclear localization signal element. The segment covering 12–42 (HRSEGARRSKNTLERTHSMKDKAGQKCKPID) has biased composition (basic and acidic residues). Phosphothreonine; by PLK1 is present on Thr-78. A disordered region spans residues 88-227 (SKHCGLSLSS…KRKKSRSKAI (140 aa)). Thr-98 carries the phosphothreonine modification. Ser-108 carries the phosphoserine modification. Thr-110 carries the phosphothreonine modification. Residues Ser-111, Ser-116, and Ser-120 each carry the phosphoserine modification. The span at 124-133 (SAKKPGRKLR) shows a compositional bias: basic residues. 3 positions are modified to phosphoserine: Ser-136, Ser-139, and Ser-141. A compositionally biased stretch (basic and acidic residues) spans 145-165 (SDTRRKVKSAEKISTQRHEVI). The span at 180–193 (SVTSKKTGPLSAQP) shows a compositional bias: polar residues. A Glycyl lysine isopeptide (Lys-Gly) (interchain with G-Cter in SUMO2) cross-link involves residue Lys-185. A phosphoserine mark is found at Ser-190 and Ser-194. Residues 208 to 224 (TQKKGKISHDKRKKSRS) show a composition bias toward basic residues. Ser-232 bears the Phosphoserine mark. Coiled coils occupy residues 297-356 (QMLT…NAAY) and 397-417 (LLGA…LLDQ). The short motif at 303 to 320 (KRKNAKMISDIEKKRQRM) is the Nuclear localization signal element.

The protein belongs to the CENP-U/AME1 family. Component of the CENPA-NAC complex, at least composed of CENPA, CENPC, CENPH, CENPM, CENPN, CENPT and CENPU. The CENPA-NAC complex interacts with the CENPA-CAD complex, composed of CENPI, CENPK, CENPL, CENPO, CENPP, CENPQ, CENPR and CENPS. Interacts with MLF1. Interacts with PLK1. In terms of assembly, (Microbial infection) Interacts with the N-terminal domain of Kaposi's sarcoma-associated herpesvirus latent nuclear antigen (LNA). Phosphorylated by PLK1 at Thr-78, creating a self-tethering site that specifically interacts with the polo-box domain of PLK1. As to expression, expressed at high levels in the testis, fetal liver, thymus, bone marrow and at lower levels in the lymph nodes, placenta, colon and spleen. Present in all cell lines examined, including B-cells, T-cells, epithelial cells and fibroblast cells. Expressed at high levels in glioblastoma cell lines.

Its subcellular location is the cytoplasm. The protein resides in the nucleus. It is found in the chromosome. It localises to the centromere. The protein localises to the kinetochore. In terms of biological role, component of the CENPA-NAC (nucleosome-associated) complex, a complex that plays a central role in assembly of kinetochore proteins, mitotic progression and chromosome segregation. The CENPA-NAC complex recruits the CENPA-CAD (nucleosome distal) complex and may be involved in incorporation of newly synthesized CENPA into centromeres. Plays an important role in the correct PLK1 localization to the mitotic kinetochores. A scaffold protein responsible for the initial recruitment and maintenance of the kinetochore PLK1 population until its degradation. Involved in transcriptional repression. The chain is Centromere protein U (CENPU) from Homo sapiens (Human).